We begin with the raw amino-acid sequence, 475 residues long: 3-isopropylmalate dehydratase large subunit (475 aa).

[4Fe-4S] cluster-binding residues include Cys347, Cys407, and Cys410. Residues 418–442 (LAPGERSASTSNRNFEGRQGKGGRT) are disordered.

This sequence belongs to the aconitase/IPM isomerase family. LeuC type 1 subfamily. As to quaternary structure, heterodimer of LeuC and LeuD. [4Fe-4S] cluster serves as cofactor.

The enzyme catalyses (2R,3S)-3-isopropylmalate = (2S)-2-isopropylmalate. The protein operates within amino-acid biosynthesis; L-leucine biosynthesis; L-leucine from 3-methyl-2-oxobutanoate: step 2/4. Its function is as follows. Catalyzes the isomerization between 2-isopropylmalate and 3-isopropylmalate, via the formation of 2-isopropylmaleate. This is 3-isopropylmalate dehydratase large subunit from Streptomyces griseus subsp. griseus (strain JCM 4626 / CBS 651.72 / NBRC 13350 / KCC S-0626 / ISP 5235).